We begin with the raw amino-acid sequence, 219 residues long: Acetylxylan esterase (219 aa).

Ser15 (nucleophile) is an active-site residue. Active-site charge relay system residues include Asp191 and His194.

This sequence belongs to the 'GDSL' lipolytic enzyme family. Homooctamer, presenting a unique donut-shaped quaternary structure built of two staggered tetrameric rings. The eight active sites are organized in four closely situated pairs, which face the relatively wide internal cavity.

The protein resides in the cytoplasm. It catalyses the reaction Deacetylation of xylans and xylo-oligosaccharides.. Its pathway is glycan degradation; xylan degradation. In terms of biological role, acetylxylan esterase involved in the degradation of xylan, a major structural heterogeneous polysaccharide found in plant biomass representing the second most abundant polysaccharide in the biosphere, after cellulose. Cleaves acetyl side groups from the xylose backbone units of the hemicellulolytic polymer xylan and xylo-oligosaccharides. Hydrolyzes about 20%-30% of the available acetyl groups on fully acetylated birch wood xylan. Completely deacetylates xylobiose peracetate (fully acetylated), and is active on both the alpha- and beta-forms of the sugar. Also hydrolyzes fully acetylated methyl-beta-D-xylopyranoside and methyl-beta-D-glucopyranoside, and the synthetic substrates 2-naphthyl acetate, 4-nitrophenyl acetate, 4-methylumbelliferyl acetate, and phenyl acetate. This Geobacillus stearothermophilus (Bacillus stearothermophilus) protein is Acetylxylan esterase.